Here is a 226-residue protein sequence, read N- to C-terminus: tRNA (guanine-N(1)-)-methyltransferase (226 aa).

Residues Gly112 and 132 to 137 contribute to the S-adenosyl-L-methionine site; that span reads IGDYVL.

This sequence belongs to the RNA methyltransferase TrmD family. In terms of assembly, homodimer.

The protein localises to the cytoplasm. It catalyses the reaction guanosine(37) in tRNA + S-adenosyl-L-methionine = N(1)-methylguanosine(37) in tRNA + S-adenosyl-L-homocysteine + H(+). Functionally, specifically methylates guanosine-37 in various tRNAs. The protein is tRNA (guanine-N(1)-)-methyltransferase of Flavobacterium johnsoniae (strain ATCC 17061 / DSM 2064 / JCM 8514 / BCRC 14874 / CCUG 350202 / NBRC 14942 / NCIMB 11054 / UW101) (Cytophaga johnsonae).